The chain runs to 186 residues: Protein C (186 aa).

Residues 1 to 12 (MSKTDWNASGPS) are compositionally biased toward polar residues. The segment at 1 to 43 (MSKTDWNASGPSRPSPSAHWPSGKLWQHGQKYQTTQDRSRPPA) is disordered.

It belongs to the morbillivirus protein C family. As to quaternary structure, interacts with the phosphoprotein (via C-terminus); this interaction allows C to associate with the ribonucleocapsid.

The protein localises to the host nucleus. It is found in the host cytoplasmic vesicle. Ribonucleocapsid-associated protein that interacts with the phosphoprotein (P), thereby increasing replication accuracy and processivity of the polymerase complex. The protein is Protein C (P/V/C) of Homo sapiens (Human).